The primary structure comprises 387 residues: Ferrochelatase (387 aa).

The tract at residues 1 to 318 (MGRVGVLLLN…VFIDALAQMV (318 aa)) is ferrochelatase. Fe cation contacts are provided by His196 and Glu277. Residues 319 to 387 (MDSLNDPPCT…QGPLHFVGLL (69 aa)) are hlip domain.

This sequence in the N-terminal section; belongs to the ferrochelatase family. It in the C-terminal section; belongs to the Hlip family.

The protein localises to the cytoplasm. It carries out the reaction heme b + 2 H(+) = protoporphyrin IX + Fe(2+). Its pathway is porphyrin-containing compound metabolism; protoheme biosynthesis; protoheme from protoporphyrin-IX: step 1/1. In terms of biological role, catalyzes the ferrous insertion into protoporphyrin IX. Its function is as follows. The Hlip proteins might regulate tetrapyrrole biosynthesis, maybe at the level of aminolevulinic acid synthesis. Deletion of 4 to 5 members of the Hlip family (always including this member) suggests the proteins are involved in regulation of chlorophyll biosynthesis, in stabilization of chlorophyll-binding proteins and/or in reuse of chlorophylls, and may regulate tetrapyrrole biosynthesis. The Hlip proteins probably stabilize PSII assembly intermediates. The protein is Ferrochelatase of Synechocystis sp. (strain ATCC 27184 / PCC 6803 / Kazusa).